The following is a 254-amino-acid chain: 3-deoxy-manno-octulosonate cytidylyltransferase (254 aa).

Belongs to the KdsB family.

The protein resides in the cytoplasm. It catalyses the reaction 3-deoxy-alpha-D-manno-oct-2-ulosonate + CTP = CMP-3-deoxy-beta-D-manno-octulosonate + diphosphate. Its pathway is nucleotide-sugar biosynthesis; CMP-3-deoxy-D-manno-octulosonate biosynthesis; CMP-3-deoxy-D-manno-octulosonate from 3-deoxy-D-manno-octulosonate and CTP: step 1/1. It functions in the pathway bacterial outer membrane biogenesis; lipopolysaccharide biosynthesis. Its function is as follows. Activates KDO (a required 8-carbon sugar) for incorporation into bacterial lipopolysaccharide in Gram-negative bacteria. The protein is 3-deoxy-manno-octulosonate cytidylyltransferase of Pseudoalteromonas atlantica (strain T6c / ATCC BAA-1087).